A 218-amino-acid chain; its full sequence is Ribose-5-phosphate isomerase A (218 aa).

Residues 28 to 31, 81 to 84, and 94 to 97 contribute to the substrate site; these read TGST, DGAD, and KGGG. The active-site Proton acceptor is Glu-103. Lys-121 contributes to the substrate binding site.

This sequence belongs to the ribose 5-phosphate isomerase family. Homodimer.

The catalysed reaction is aldehydo-D-ribose 5-phosphate = D-ribulose 5-phosphate. It participates in carbohydrate degradation; pentose phosphate pathway; D-ribose 5-phosphate from D-ribulose 5-phosphate (non-oxidative stage): step 1/1. Its function is as follows. Catalyzes the reversible conversion of ribose-5-phosphate to ribulose 5-phosphate. The polypeptide is Ribose-5-phosphate isomerase A (Proteus mirabilis (strain HI4320)).